Consider the following 385-residue polypeptide: tRNA pseudouridine synthase D (385 aa).

The active-site Nucleophile is the D86. Residues 165–305 (GFPNYFGNQR…TRFLQKDIAP (141 aa)) form the TRUD domain.

Belongs to the pseudouridine synthase TruD family.

The catalysed reaction is uridine(13) in tRNA = pseudouridine(13) in tRNA. Functionally, responsible for synthesis of pseudouridine from uracil-13 in transfer RNAs. The chain is tRNA pseudouridine synthase D from Helicobacter hepaticus (strain ATCC 51449 / 3B1).